The primary structure comprises 104 residues: Alpha-amylase inhibitor HOE-467A (104 aa).

The N-terminal stretch at 1-30 (MRVRALRLAALVGAGAALALSPLAAGPASA) is a signal peptide. 2 disulfides stabilise this stretch: cysteine 41–cysteine 57 and cysteine 75–cysteine 103.

Inhibits mammalian alpha-amylases specifically but has no action on plant and microbial alpha-amylases. Forms a tight stoichiometric 1:1 complex with alpha-amylase. The chain is Alpha-amylase inhibitor HOE-467A from Streptomyces tendae.